A 251-amino-acid chain; its full sequence is Small ribosomal subunit protein uS4c (251 aa).

S4 RNA-binding domains follow at residues 110-170 (MRLD…KLVN) and 189-251 (RTLA…QFSE).

This sequence belongs to the universal ribosomal protein uS4 family. Part of the 30S ribosomal subunit. Contacts protein S5. The interaction surface between S4 and S5 is involved in control of translational fidelity.

It localises to the plastid. Its subcellular location is the chloroplast. Functionally, one of the primary rRNA binding proteins, it binds directly to 16S rRNA where it nucleates assembly of the body of the 30S subunit. In terms of biological role, with S5 and S12 plays an important role in translational accuracy. The sequence is that of Small ribosomal subunit protein uS4c (rps4) from Tetradesmus obliquus (Green alga).